The primary structure comprises 109 residues: Large ribosomal subunit protein uL24 (109 aa).

It belongs to the universal ribosomal protein uL24 family. Part of the 50S ribosomal subunit.

In terms of biological role, one of two assembly initiator proteins, it binds directly to the 5'-end of the 23S rRNA, where it nucleates assembly of the 50S subunit. One of the proteins that surrounds the polypeptide exit tunnel on the outside of the subunit. This is Large ribosomal subunit protein uL24 from Ehrlichia canis (strain Jake).